The primary structure comprises 61 residues: Small ribosomal subunit protein uS14B (61 aa).

Positions 24, 27, 40, and 43 each coordinate Zn(2+).

Belongs to the universal ribosomal protein uS14 family. Zinc-binding uS14 subfamily. Part of the 30S ribosomal subunit. Contacts proteins S3 and S10. Zn(2+) serves as cofactor.

Its function is as follows. Binds 16S rRNA, required for the assembly of 30S particles and may also be responsible for determining the conformation of the 16S rRNA at the A site. This is Small ribosomal subunit protein uS14B from Staphylococcus epidermidis (strain ATCC 35984 / DSM 28319 / BCRC 17069 / CCUG 31568 / BM 3577 / RP62A).